The sequence spans 437 residues: Transcription factor ets-4 (437 aa).

The tract at residues 1–30 (MNGTGSVGHRWNSLSPEPHSGTESTASTPF) is disordered. Positions 21–30 (GTESTASTPF) are enriched in polar residues. Lysine 32 is covalently cross-linked (Glycyl lysine isopeptide (Lys-Gly) (interchain with G-Cter in SUMO)). Position 73 is a phosphoserine (serine 73). Lysine 83 participates in a covalent cross-link: Glycyl lysine isopeptide (Lys-Gly) (interchain with G-Cter in SUMO). The PNT domain maps to 120–202 (HLIQDISTTC…AQLQVWKTGT (83 aa)). The disordered stretch occupies residues 275 to 302 (QGTVLPSPSNSDTSSNGSSQDMNDDDID). The span at 280-293 (PSPSNSDTSSNGSS) shows a compositional bias: low complexity. The ETS DNA-binding region spans 349-432 (VHLWQFIREL…KKQRLVYKFL (84 aa)).

Belongs to the ETS family. May interact with cebp-1. May interact with tdpt-1 to facilitate its sumoylation. Post-translationally, phosphorylation is required for axon regeneration. Sumoylated; sumoylation inhibits phosphorylation, which is required for probable interaction with cebp-1 and consequently the expression of svh-2. In terms of tissue distribution, expressed in cells of the anterior and posterior bulbs of the pharynx, seam cells, a few unidentified cells of the vulva, the hypodermis, several unidentified neurons, labial socket cells of the head and rectal cells.

It localises to the nucleus. Its function is as follows. Transcription factor which binds to 5'-GGAA/T-3' DNA consensus sequences. Both positively and negatively regulates the expression of target genes. Plays a role in the regulation of adult lifespan, which may in part be through modulation of daf-16 activity. Regulates the expression of genes such as svh-2 in response to axon injury and in addition, may function downstream of the cAMP signaling pathway to promote axon regeneration. Regulates the expression of lipid metabolism genes and may also control the expression of the RNA-binding protein rege-1 which too has been implicated in the control of fat accumulation. This chain is Transcription factor ets-4, found in Caenorhabditis elegans.